The chain runs to 937 residues: MORC family CW-type zinc finger protein 4 (937 aa).

The segment at 420 to 472 (KVPDQTWVQCDECLKWRKLPGKIDPSMLPARWFCYYNSHPKYRRCSVPEEQEL) adopts a CW-type zinc-finger fold. Residues Cys-429, Cys-432, Cys-453, and Cys-464 each coordinate Zn(2+). Residues 606 to 637 (PEGENSHDKSSSERSTPPYLFPEYPEASKNTG) are disordered. A coiled-coil region spans residues 762–876 (KLKNQRELEE…LEMLQKAQVS (115 aa)).

Expressed at low levels in normal tissues, with highest expression levels in placenta and testis. Expression is significantly increased in subset of diffuse large B-cell lymphomas.

The protein resides in the nucleus. Histone methylation reader which binds to non-methylated (H3K4me0), monomethylated (H3K4me1), dimethylated (H3K4me2) and trimethylated (H3K4me3) 'Lys-4' on histone H3. The order of binding preference is H3K4me3 &gt; H3K4me2 &gt; H3K4me1 &gt; H3K4me0. The chain is MORC family CW-type zinc finger protein 4 (MORC4) from Homo sapiens (Human).